Reading from the N-terminus, the 413-residue chain is GTPase HflX (413 aa).

The Hflx-type G domain occupies V200–H386. Residues G206–S213, F231–D235, D252–G255, N318–D321, and S364–T366 each bind GTP. Residues S213 and T233 each contribute to the Mg(2+) site.

Belongs to the TRAFAC class OBG-HflX-like GTPase superfamily. HflX GTPase family. Monomer. Associates with the 50S ribosomal subunit. The cofactor is Mg(2+).

It is found in the cytoplasm. GTPase that associates with the 50S ribosomal subunit and may have a role during protein synthesis or ribosome biogenesis. This is GTPase HflX from Flavobacterium psychrophilum (strain ATCC 49511 / DSM 21280 / CIP 103535 / JIP02/86).